The chain runs to 142 residues: Large ribosomal subunit protein uL13 (142 aa).

It belongs to the universal ribosomal protein uL13 family. As to quaternary structure, part of the 50S ribosomal subunit.

Functionally, this protein is one of the early assembly proteins of the 50S ribosomal subunit, although it is not seen to bind rRNA by itself. It is important during the early stages of 50S assembly. The protein is Large ribosomal subunit protein uL13 of Polaromonas sp. (strain JS666 / ATCC BAA-500).